A 349-amino-acid chain; its full sequence is Trans-enoyl reductase phmE (349 aa).

NADP(+) is bound at residue 55-58; the sequence is CDWK. 143-150 is a binding site for substrate; the sequence is TGIGTMGL. NADP(+) is bound by residues 182–185, Tyr-200, and 247–248; these read SPKN and LE. 267-271 contributes to the substrate binding site; sequence GMAIL. 336-337 is an NADP(+) binding site; it reads VS.

It belongs to the zinc-containing alcohol dehydrogenase family. Monomer.

The protein operates within mycotoxin biosynthesis. Its function is as follows. Trans-enoyl reductase; part of the gene cluster that mediates the biosynthesis of the mycotoxins phomacins, leucine-derived cytochalasans with potent actin polymerization-inhibitory activities and monocot-specific antigerminative activities. The first step in the pathway is catalyzed by the hybrid PKS-NRPS phmA, assisted by the enoyl reductase phmE, that are responsible for fusion of the leucine precursor and the polyketide backbone to produce a 2-pyrrolidone intermediate. The polyketide synthase module (PKS) of phmA is responsible for the synthesis of the polyketide backbone and the downstream nonribosomal peptide synthetase (NRPS) amidates the carboxyl end of the polyketide with the leucine precursor. Because phmA lacks a designated enoylreductase (ER) domain, the required activity is provided the enoyl reductase phmE. Reduction by the hydrolyase phmG, followed by dehydration and intra-molecular Diels-Alder cyclization by the Diels-Alderase phmD then yield the required isoindolone-fused macrocycle. A number of oxidative steps catalyzed by the tailoring cytochrome P450 monooxygenase phmB, the FAD-linked oxidoreductase phmC and the short-chain dehydrogenase/reductase phmF, are further required to afford the final products, phomacin D and phomacin E. The protein is Trans-enoyl reductase phmE of Phaeosphaeria nodorum (strain SN15 / ATCC MYA-4574 / FGSC 10173) (Glume blotch fungus).